The chain runs to 206 residues: Small ribosomal subunit protein uS4 (206 aa).

Residues Gly96–Lys156 form the S4 RNA-binding domain.

The protein belongs to the universal ribosomal protein uS4 family. Part of the 30S ribosomal subunit. Contacts protein S5. The interaction surface between S4 and S5 is involved in control of translational fidelity.

One of the primary rRNA binding proteins, it binds directly to 16S rRNA where it nucleates assembly of the body of the 30S subunit. In terms of biological role, with S5 and S12 plays an important role in translational accuracy. This is Small ribosomal subunit protein uS4 from Vibrio campbellii (strain ATCC BAA-1116).